The chain runs to 285 residues: Type II secretion system protein C (285 aa).

Residues 1–27 (MARLQAFKDPSFHSLVATFRSLPLIRR) are Cytoplasmic-facing. Residues 28–48 (FVLGLILLLICQQLAVLTWRF) traverse the membrane as a helical segment. Residues 49-285 (LLPEDSRIVG…DIYLALDGDH (237 aa)) lie on the Periplasmic side of the membrane.

Belongs to the GSP C family.

Its subcellular location is the cell inner membrane. Functionally, involved in a type II secretion system (T2SS, formerly general secretion pathway, GSP) for the export of proteins. Required for the translocation of the multiple pectic enzymes. The polypeptide is Type II secretion system protein C (outC) (Pectobacterium carotovorum subsp. carotovorum (Erwinia carotovora subsp. carotovora)).